The sequence spans 200 residues: Outer-membrane lipoprotein carrier protein (200 aa).

The N-terminal stretch at 1 to 18 (MIGLFLAAPLVLSSAVWA) is a signal peptide.

The protein belongs to the LolA family. Monomer.

It localises to the periplasm. Its function is as follows. Participates in the translocation of lipoproteins from the inner membrane to the outer membrane. Only forms a complex with a lipoprotein if the residue after the N-terminal Cys is not an aspartate (The Asp acts as a targeting signal to indicate that the lipoprotein should stay in the inner membrane). This chain is Outer-membrane lipoprotein carrier protein, found in Photobacterium profundum (strain SS9).